Consider the following 174-residue polypeptide: NAD(P)H-quinone oxidoreductase subunit J (174 aa).

The protein belongs to the complex I 30 kDa subunit family. NDH-1 can be composed of about 15 different subunits; different subcomplexes with different compositions have been identified which probably have different functions.

It localises to the cellular thylakoid membrane. The catalysed reaction is a plastoquinone + NADH + (n+1) H(+)(in) = a plastoquinol + NAD(+) + n H(+)(out). It catalyses the reaction a plastoquinone + NADPH + (n+1) H(+)(in) = a plastoquinol + NADP(+) + n H(+)(out). In terms of biological role, NDH-1 shuttles electrons from an unknown electron donor, via FMN and iron-sulfur (Fe-S) centers, to quinones in the respiratory and/or the photosynthetic chain. The immediate electron acceptor for the enzyme in this species is believed to be plastoquinone. Couples the redox reaction to proton translocation, and thus conserves the redox energy in a proton gradient. Cyanobacterial NDH-1 also plays a role in inorganic carbon-concentration. The chain is NAD(P)H-quinone oxidoreductase subunit J from Picosynechococcus sp. (strain ATCC 27264 / PCC 7002 / PR-6) (Agmenellum quadruplicatum).